Here is a 607-residue protein sequence, read N- to C-terminus: Guanine nucleotide-binding protein-like 1 (607 aa).

A compositionally biased stretch (basic residues) spans 1-14; it reads MPRKKPFSVKQKKK. Positions 1–81 are disordered; that stretch reads MPRKKPFSVK…GPRGYDPNRY (81 aa). Residues 15-26 show a composition bias toward basic and acidic residues; that stretch reads QLQDKRERKRGL. 3 positions are modified to phosphoserine: Ser-32, Ser-33, and Ser-34. Phosphothreonine is present on residues Thr-48 and Thr-50. Ser-51 and Ser-68 each carry phosphoserine. The CP-type G domain occupies 178 to 418; sequence WRQLWRVLEM…LCDCPGLIFP (241 aa). Residue 225–228 participates in GTP binding; sequence NKVD. A Phosphoserine modification is found at Ser-324. GTP-binding positions include 367-374 and 411-415; these read GFPNVGKS and DCPGL. The interval 544–607 is disordered; sequence GRVGPAGDEE…PYALLGEGEC (64 aa). Residues 550-585 are compositionally biased toward acidic residues; it reads GDEEEEEEEELSSSCEEEGEEDRDADEEGEGDEDTP. Phosphoserine is present on residues Ser-561, Ser-562, and Ser-563.

It belongs to the TRAFAC class YlqF/YawG GTPase family.

Its function is as follows. Possible regulatory or functional link with the histocompatibility cluster. This chain is Guanine nucleotide-binding protein-like 1 (Gnl1), found in Rattus norvegicus (Rat).